We begin with the raw amino-acid sequence, 177 residues long: Large ribosomal subunit protein uL6 (177 aa).

Belongs to the universal ribosomal protein uL6 family. Part of the 50S ribosomal subunit.

Functionally, this protein binds to the 23S rRNA, and is important in its secondary structure. It is located near the subunit interface in the base of the L7/L12 stalk, and near the tRNA binding site of the peptidyltransferase center. This chain is Large ribosomal subunit protein uL6, found in Yersinia enterocolitica serotype O:8 / biotype 1B (strain NCTC 13174 / 8081).